We begin with the raw amino-acid sequence, 199 residues long: uncharacterized protein (199 aa).

A coiled-coil region spans residues 72 to 116 (EIYSEIENEESDIEEMSEEMKAFFAKTQEHRQKLKEQRAAEKRKE). Residues 98–117 (TQEHRQKLKEQRAAEKRKEG) show a composition bias toward basic and acidic residues. Positions 98–127 (TQEHRQKLKEQRAAEKRKEGQSSSKSQEEY) are disordered.

This is an uncharacterized protein from Caenorhabditis elegans.